A 687-amino-acid polypeptide reads, in one-letter code: A-kinase anchor protein 8 (687 aa).

An interaction with MCM2 region spans residues 1 to 195 (MEQGYGGYGA…FLRGRGQGRF (195 aa)). An interaction with DPY30 region spans residues 1 to 210 (MEQGYGGYGA…SSTFIRSDPF (210 aa)). Ser-72 is subject to Phosphoserine. 2 disordered regions span residues 105 to 124 (KEGG…DRDS) and 185 to 218 (GFLR…ASEP). Asymmetric dimethylarginine; alternate is present on Arg-109. Arg-109 carries the post-translational modification Omega-N-methylarginine; alternate. The segment covering 109 to 118 (RGGISSGGEG) has biased composition (gly residues). Residues 109–201 (RGGISSGGEG…QGRFQDRSNS (93 aa)) form an interaction with DDX5 region. Ser-199 carries the post-translational modification Phosphoserine. Residues Arg-232 and Arg-276 each carry the omega-N-methylarginine modification. The segment at 277–379 (SQTRIRDWPR…KQRRRDRMRD (103 aa)) is disordered. Basic and acidic residues-rich tracts occupy residues 280 to 294 (RIRD…ERFG) and 311 to 320 (PDAKLARADS). The Bipartite nuclear localization signal motif lies at 286-303 (RRRGFERFGPDNMGRKRK). Residue Lys-314 forms a Glycyl lysine isopeptide (Lys-Gly) (interchain with G-Cter in SUMO2) linkage. A phosphoserine mark is found at Ser-320, Ser-325, and Ser-336. A compositionally biased stretch (acidic residues) spans 321–331 (DGDLSENDDGA). Residues 335 to 357 (RSGDEEFRGEDDLCDSRKQRGEK) show a composition bias toward basic and acidic residues. The interval 384-447 (RIQFACSVCK…NKKIEKRRQE (64 aa)) is involved in chromatin-binding. 2 C2H2 AKAP95-type zinc fingers span residues 389–411 (CSVC…SKFH) and 478–501 (CLAC…SVDH). The interval 522–565 (SVLNNKHIVKMLEKYLKGEDPFVNETADLETEGDENVGEEKEET) is involved in condensin complex recruitment. Phosphothreonine is present on Thr-552. Positions 568–585 (EVAAEVLAEVITAAVKAV) are RII-binding. The tract at residues 572-589 (EVLAEVITAAVKAVEGEG) is required for interaction with MYCBP. The segment at 624-659 (QTCEAASETRSIEDKTRGEAAEARNEAAMPTADAGS) is disordered. Positions 633–648 (RSIEDKTRGEAAEARN) are enriched in basic and acidic residues. Ser-659 is modified (phosphoserine).

This sequence belongs to the AKAP95 family. In terms of assembly, binds to the PKA RII-alpha regulatory subunit PRKAR2A. Interacts (via C-terminus) with FIGN. Interacts with NCAPD2, CCND3, CCNE1, MCM2, RPS6KA1, DDX5, PDE4A. Interacts with MYCBP; MYCBP is translocated to the nucleus and the interaction prevents the association of the PKA catalytic subunit leading to suppression of PKA activity. Interacts with CCND1, CASP3. Interacts with NFKB1; detetcted in the cytoplasm. Interacts with DPY30; mediating AKAP8 association with at least the MLL4/WBP7 HMT complex. Interacts with HDAC3; increased during mitosis. Interacts with GJA1; in the nucleus and in the nuclear membrane; the nuclear association increases with progress of cell cycle G1, S and G2 phase and decreases in M phase. Post-translationally, phosphorylated on tyrosine residues probably by SRC subfamily protein kinases; multiple phosphorylation is leading to dissociation from nuclear structures implicated in chromatin structural changes.

It is found in the nucleus matrix. Its subcellular location is the nucleus. The protein localises to the nucleolus. It localises to the cytoplasm. In terms of biological role, anchoring protein that mediates the subcellular compartmentation of cAMP-dependent protein kinase (PKA type II). Acts as an anchor for a PKA-signaling complex onto mitotic chromosomes, which is required for maintenance of chromosomes in a condensed form throughout mitosis. Recruits condensin complex subunit NCAPD2 to chromosomes required for chromatin condensation; the function appears to be independent from PKA-anchoring. Specifically involved in recruitment of CAPD2 to, and condensation of maternal but not paternal chromosomes. May help to deliver cyclin D/E to CDK4 to facilitate cell cycle progression. Required for cell cycle G2/M transition and histone deacetylation during mitosis. In mitotic cells recruits HDAC3 to the vicinity of chromatin leading to deacetylation and subsequent phosphorylation at 'Ser-10' of histone H3; in this function may act redundantly with AKAP8L. Involved in nuclear retention of RPS6KA1 upon ERK activation thus inducing cell proliferation. May be involved in regulation of DNA replication by acting as scaffold for MCM2. Enhances HMT activity of the KMT2 family MLL4/WBP7 complex and is involved in transcriptional regulation. In a teratocarcinoma cell line is involved in retinoic acid-mediated induction of developmental genes implicating H3 'Lys-4' methylation. May be involved in recruitment of active CASP3 to the nucleus in apoptotic cells. May act as a carrier protein of GJA1 for its transport to the nucleus. May play a repressive role in the regulation of rDNA transcription. Preferentially binds GC-rich DNA in vitro. In cells, associates with ribosomal RNA (rRNA) chromatin, preferentially with rRNA promoter and transcribed regions. Involved in modulation of Toll-like receptor signaling. Required for the cAMP-dependent suppression of TNF-alpha in early stages of LPS-induced macrophage activation; the function probably implicates targeting of PKA to NFKB1. This chain is A-kinase anchor protein 8 (Akap8), found in Mus musculus (Mouse).